The sequence spans 328 residues: Phosphate acetyltransferase (328 aa).

It belongs to the phosphate acetyltransferase and butyryltransferase family.

It is found in the cytoplasm. It catalyses the reaction acetyl-CoA + phosphate = acetyl phosphate + CoA. It participates in metabolic intermediate biosynthesis; acetyl-CoA biosynthesis; acetyl-CoA from acetate: step 2/2. This Thermoanaerobacterium thermosaccharolyticum (strain ATCC 7956 / DSM 571 / NCIMB 9385 / NCA 3814 / NCTC 13789 / WDCM 00135 / 2032) (Clostridium thermosaccharolyticum) protein is Phosphate acetyltransferase (pta).